A 321-amino-acid chain; its full sequence is Taste receptor type 2 member 135 (321 aa).

Over 1-28 (MGPIMSTGETSTAHTVLGCQITDKTVIT) the chain is Extracellular. A helical transmembrane segment spans residues 29–49 (LFVILVFSCLVAVVGNGFIII). The Cytoplasmic portion of the chain corresponds to 50-75 (ALGMKWLLRRTLSAHNKLLISLAASR). A helical membrane pass occupies residues 76 to 96 (FCLQCVVIGKNIYVFLNPSSF). At 97 to 106 (PYNPVIQLLN) the chain is on the extracellular side. Residues 107–127 (LMWDFLTAATIWFCSLLGFFY) form a helical membrane-spanning segment. Over 128–149 (CVKIATLTHPVFVWLKYRLPGW) the chain is Cytoplasmic. Residues 150-170 (VPWMLLSAVGMSSLTSILCFI) form a helical membrane-spanning segment. Over 171-207 (GNHMIYQNYARRGHQPWNATGNSLRHSLEKFYFISIK) the chain is Extracellular. N-linked (GlcNAc...) asparagine glycosylation is present at asparagine 188. A helical transmembrane segment spans residues 208–228 (IIMWTVPTVIFSIFMSLLLVS). The Cytoplasmic segment spans residues 229–253 (LVRHMKKTLLALSELRDVWAQAHFK). Residues 254 to 274 (ALLPLLSFIILFISCFLTLVL) traverse the membrane as a helical segment. The Extracellular segment spans residues 275–286 (SSASSTPYQEFR). Residues 287–307 (YWMWQVVIHLCTVIHPIVILL) form a helical membrane-spanning segment. Over 308 to 321 (SNPVLRVVMKRGCC) the chain is Cytoplasmic.

This sequence belongs to the G-protein coupled receptor T2R family.

The protein localises to the membrane. In terms of biological role, putative taste receptor which may play a role in the perception of bitterness. The chain is Taste receptor type 2 member 135 from Rattus norvegicus (Rat).